A 394-amino-acid chain; its full sequence is Guanine nucleotide-binding protein G(s) subunit alpha (394 aa).

The interval 1–23 (MGCLGNSKTEDQRNEEKAQREAN) is disordered. The N-palmitoyl glycine moiety is linked to residue Gly-2. Residue Cys-3 is the site of S-palmitoyl cysteine attachment. The segment covering 8–23 (KTEDQRNEEKAQREAN) has biased composition (basic and acidic residues). A G-alpha domain is found at 39–394 (ATHRLLLLGA…RMHLRQYELL (356 aa)). The tract at residues 42 to 55 (RLLLLGAGESGKST) is G1 motif. Residue 47–55 (GAGESGKST) coordinates GTP. Ser-54 lines the Mg(2+) pocket. Residues 68-90 (FNGEGGEEDPQAARSNSDGEKAT) are disordered. Residues 196 to 204 (DLLRCRVLT) are G2 motif. Residues 197-204 (LLRCRVLT), 223-227 (DVGGQ), 292-295 (NKQD), and Ala-366 contribute to the GTP site. Thr-204 is a binding site for Mg(2+). The G3 motif stretch occupies residues 219–228 (FHMFDVGGQR). The segment at 288-295 (ILFLNKQD) is G4 motif. The interval 364–369 (TCAVDT) is G5 motif.

Belongs to the G-alpha family. G(s) subfamily. As to quaternary structure, heterotrimeric G proteins are composed of 3 units; alpha, beta and gamma. The alpha chain contains the guanine nucleotide binding site. Interacts with CRY1; the interaction may block GPCR-mediated regulation of cAMP concentrations. Interacts with ADCY6 and stimulates its adenylyl cyclase activity. Interacts with ADCY2 and ADCY5. Stimulates the ADCY5 adenylyl cyclase activity. Interaction with SASH1.

It is found in the cell membrane. In terms of biological role, guanine nucleotide-binding proteins (G proteins) function as transducers in numerous signaling pathways controlled by G protein-coupled receptors (GPCRs). Signaling involves the activation of adenylyl cyclases, resulting in increased levels of the signaling molecule cAMP. GNAS functions downstream of several GPCRs, including beta-adrenergic receptors. Stimulates the Ras signaling pathway via RAPGEF2. In Cricetulus griseus (Chinese hamster), this protein is Guanine nucleotide-binding protein G(s) subunit alpha (GNAS).